Here is a 429-residue protein sequence, read N- to C-terminus: E3 ubiquitin-protein ligase ZNRF4 (429 aa).

The first 27 residues, 1–27 (MPLCRPEHLMPRASRVPVAASLPLSHA), serve as a signal peptide directing secretion. The Lumenal portion of the chain corresponds to 28 to 250 (VIPTQLPSRP…PPCHDLGCHP (223 aa)). The disordered stretch occupies residues 30–67 (PTQLPSRPGHRPPGRPRRCPKASCLPPPVGPSSTQTAK). Basic residues predominate over residues 37–49 (PGHRPPGRPRRCP). N-linked (GlcNAc...) asparagine glycosylation is found at Asn-107, Asn-152, and Asn-229. The PA domain maps to 151–223 (GNRSLGAIVL…VSEAASQDLR (73 aa)). The chain crosses the membrane as a helical span at residues 251–271 (VLTVSWVLGCTLALVVSAFFV). Residues 272–429 (LNHLWLWAQA…SSAPPEAPGQ (158 aa)) lie on the Cytoplasmic side of the membrane. The RING-type; atypical zinc finger occupies 309–352 (CAICLDEYEEGDQLKILPCSHTYHCKCIDPWFSQAPRRSCPVCK).

In terms of assembly, interacts with CANX.

It localises to the endoplasmic reticulum membrane. The catalysed reaction is S-ubiquitinyl-[E2 ubiquitin-conjugating enzyme]-L-cysteine + [acceptor protein]-L-lysine = [E2 ubiquitin-conjugating enzyme]-L-cysteine + N(6)-ubiquitinyl-[acceptor protein]-L-lysine.. The protein operates within protein modification; protein ubiquitination. In terms of biological role, E3 ubiquitin-protein ligase that acts as a negative regulator of NOD2 signaling by mediating ubiquitination and degradation of RIPK2. Also catalyzes ubiquitination and proteasomal degradation of CANX within the endoplasmic reticulum. Could have a role in spermatogenesis. This chain is E3 ubiquitin-protein ligase ZNRF4, found in Homo sapiens (Human).